The chain runs to 541 residues: Effector protein hopAB1 (541 aa).

Disordered stretches follow at residues 1–94 (MPGI…EAQQ), 168–222 (QRAL…RHPQ), and 317–338 (RQTTTNSPELPPLASSAESGRR). A compositionally biased stretch (basic and acidic residues) spans 18 to 31 (TDGEPVTEREHDSS). A compositionally biased stretch (low complexity) spans 183-196 (SSSGSSQRSLIGRS).

Belongs to the HopAB family.

The protein resides in the secreted. Its function is as follows. Effector protein that plays different roles depending on the species and plant cultivars that interact with the pathogen. Acts as a virulence determinant by enhancing the development of disease symptoms and bacterial growth. Acts as an avirulence factor by eliciting hypersensitive response (HR) and plant resistance. This chain is Effector protein hopAB1 (hopAB1), found in Pseudomonas savastanoi (Pseudomonas syringae pv. savastanoi).